We begin with the raw amino-acid sequence, 359 residues long: Mitochondrial glutathione transporter SLC25A39 (359 aa).

Over 1–14 the chain is Mitochondrial intermembrane; it reads MDDQDPGGISPLQQ. Solcar repeat units lie at residues 9 to 151, 159 to 243, and 253 to 347; these read ISPL…LKAF, SDLY…VKSQ, and TSVG…GKSF. The chain crosses the membrane as a helical span at residues 15 to 35; sequence MVASGAGAVVTSLFMTPLDVV. The Mitochondrial matrix portion of the chain corresponds to 36–121; it reads KVRLQSQRPT…VKIVRHEGTR (86 aa). [2Fe-2S] cluster is bound by residues C74, C78, C88, and C94. Residues 122–142 form a helical membrane-spanning segment; it reads TLWSGLPATLVMTVPATAIYF. The Mitochondrial intermembrane segment spans residues 143-164; it reads TAYDQLKAFLCGQSLTSDLYAP. A helical membrane pass occupies residues 165 to 185; the sequence is MVAGALARMGTVTVVSPLELV. The Mitochondrial matrix segment spans residues 186-214; that stretch reads RTKLQAQHVSYRELAACVQAAVAQGGWRS. A helical membrane pass occupies residues 215-235; the sequence is LWLGWGPTALRDVPFSALYWF. The Mitochondrial intermembrane segment spans residues 236-255; it reads NYELVKSQLNGPRQKEQTSV. The chain crosses the membrane as a helical span at residues 256–276; it reads GISFVAGGISGMVAATLTLPF. Topologically, residues 277–317 are mitochondrial matrix; sequence DVVKTQRQMSLGAVEAMRVKPPRVDSTWLLLRRIQAESGTR. A helical transmembrane segment spans residues 318 to 338; it reads GLFAGFLPRIIKAAPSCAIMI. Residues 339 to 359 lie on the Mitochondrial intermembrane side of the membrane; it reads STYEFGKSFFHRLNQEQPLGH.

It belongs to the mitochondrial carrier (TC 2.A.29) family. Cleaved and degraded by AFG3L2; degradation by AFG3L2 is regulated by the ability of SLC25A39 to bind iron-sulfur. In absence of mitochondrial glutathione, SLC25A39 binds iron-sulfur, preventing cleavage and degradation by AFG3L2. The presence of mitochondrial glutathione prevents iron-sulfur-binding to SLC25A39, promoting cleavage and degradation by AFG3L2.

The protein localises to the mitochondrion inner membrane. The enzyme catalyses glutathione(in) = glutathione(out). Its activity is regulated as follows. The activity of SLC25A39 is regulated by levels of mitochondrial glutathione via its ability to bind [2Fe-2S] iron-sulfur cluster. Upon physiological levels of mitochondrial glutathione, glutathione prevents iron-sulfur-binding to SLC25A39 promoting cleavage and degradation by AFG3L2. Upon depletion of mitochondrial glutathione, SLC25A39 binds iron-sulfur, preventing cleavage and degradation by AFG3L2. Its function is as follows. Mitochondrial transporter required for glutathione import into mitochondria. Glutathione, which plays key roles in oxidative metabolism, is produced exclusively in the cytosol and is imported in many organelles. Mitochondrial glutathione is required for the activity and stability of proteins containing iron-sulfur clusters, as well as erythropoiesis. The chain is Mitochondrial glutathione transporter SLC25A39 (Slc25a39) from Rattus norvegicus (Rat).